Consider the following 221-residue polypeptide: Deoxyribose-phosphate aldolase (221 aa).

The Proton donor/acceptor role is filled by D91. Residue K153 is the Schiff-base intermediate with acetaldehyde of the active site. Residue K182 is the Proton donor/acceptor of the active site.

Belongs to the DeoC/FbaB aldolase family. DeoC type 1 subfamily.

It localises to the cytoplasm. It carries out the reaction 2-deoxy-D-ribose 5-phosphate = D-glyceraldehyde 3-phosphate + acetaldehyde. It functions in the pathway carbohydrate degradation; 2-deoxy-D-ribose 1-phosphate degradation; D-glyceraldehyde 3-phosphate and acetaldehyde from 2-deoxy-alpha-D-ribose 1-phosphate: step 2/2. In terms of biological role, catalyzes a reversible aldol reaction between acetaldehyde and D-glyceraldehyde 3-phosphate to generate 2-deoxy-D-ribose 5-phosphate. This is Deoxyribose-phosphate aldolase from Clostridium botulinum (strain Alaska E43 / Type E3).